The following is a 379-amino-acid chain: MSQVSLVVMGAGESSRFRQGLSIKKQWLRLGETPLWKHVALHLSKQACFDQVIITASPKEVKYMQKQVDFEVIEGGGTRQESLQNALASVKTPWVLVSDVARFDVPSEVISRVIGRLGEAECVAPAIGVSDTVSYQGEYLSRSEVKLIQTPQLSHVESLLLAFRQGDFTDESSAIAKSGGRVLLVEGSERLKKLTHPHELTLLQGFEPPFGGCYGGSGFDVHAFMEGEGLRLAGVNIPAPVTFKAHSDGDVAIHALIDALLGAAGAGDIGEWFPDSDLAYKGVDSTLLLQEVIKFIRGIGFELINADLTIMAQAPKLSPYKEAMERRLGEVMEVSRQRISVKATTTESLGFVGRKEGVAVSAQVVLKLLDWTKHACFNR.

Residues 1 to 213 form a 2-C-methyl-D-erythritol 4-phosphate cytidylyltransferase region; it reads MSQVSLVVMG…QGFEPPFGGC (213 aa). The tract at residues 214 to 379 is 2-C-methyl-D-erythritol 2,4-cyclodiphosphate synthase; the sequence is YGGSGFDVHA…DWTKHACFNR (166 aa). Residues Asp-220 and His-222 each contribute to the a divalent metal cation site. Residues 220-222 and 246-247 each bind 4-CDP-2-C-methyl-D-erythritol 2-phosphate; these read DVH and HS. His-254 provides a ligand contact to a divalent metal cation. Residues 268-270, 273-277, 344-347, Phe-351, and Arg-354 contribute to the 4-CDP-2-C-methyl-D-erythritol 2-phosphate site; these read DIG, FPDSD, and TTTE.

This sequence in the N-terminal section; belongs to the IspD/TarI cytidylyltransferase family. IspD subfamily. The protein in the C-terminal section; belongs to the IspF family. Requires a divalent metal cation as cofactor.

The enzyme catalyses 2-C-methyl-D-erythritol 4-phosphate + CTP + H(+) = 4-CDP-2-C-methyl-D-erythritol + diphosphate. It carries out the reaction 4-CDP-2-C-methyl-D-erythritol 2-phosphate = 2-C-methyl-D-erythritol 2,4-cyclic diphosphate + CMP. The protein operates within isoprenoid biosynthesis; isopentenyl diphosphate biosynthesis via DXP pathway; isopentenyl diphosphate from 1-deoxy-D-xylulose 5-phosphate: step 2/6. It functions in the pathway isoprenoid biosynthesis; isopentenyl diphosphate biosynthesis via DXP pathway; isopentenyl diphosphate from 1-deoxy-D-xylulose 5-phosphate: step 4/6. Functionally, bifunctional enzyme that catalyzes the formation of 4-diphosphocytidyl-2-C-methyl-D-erythritol from CTP and 2-C-methyl-D-erythritol 4-phosphate (MEP) (IspD), and catalyzes the conversion of 4-diphosphocytidyl-2-C-methyl-D-erythritol 2-phosphate (CDP-ME2P) to 2-C-methyl-D-erythritol 2,4-cyclodiphosphate (ME-CPP) with a corresponding release of cytidine 5-monophosphate (CMP) (IspF). In Wolinella succinogenes (strain ATCC 29543 / DSM 1740 / CCUG 13145 / JCM 31913 / LMG 7466 / NCTC 11488 / FDC 602W) (Vibrio succinogenes), this protein is Bifunctional enzyme IspD/IspF.